A 701-amino-acid chain; its full sequence is Elongation factor G 1 (701 aa).

A tr-type G domain is found at 13–288 (KYTRNIGIMA…GVIDYLPSPL (276 aa)). GTP-binding positions include 22 to 29 (AHIDAGKT), 86 to 90 (DTPGH), and 140 to 143 (NKMD).

This sequence belongs to the TRAFAC class translation factor GTPase superfamily. Classic translation factor GTPase family. EF-G/EF-2 subfamily.

The protein resides in the cytoplasm. In terms of biological role, catalyzes the GTP-dependent ribosomal translocation step during translation elongation. During this step, the ribosome changes from the pre-translocational (PRE) to the post-translocational (POST) state as the newly formed A-site-bound peptidyl-tRNA and P-site-bound deacylated tRNA move to the P and E sites, respectively. Catalyzes the coordinated movement of the two tRNA molecules, the mRNA and conformational changes in the ribosome. This is Elongation factor G 1 from Bdellovibrio bacteriovorus (strain ATCC 15356 / DSM 50701 / NCIMB 9529 / HD100).